A 234-amino-acid chain; its full sequence is Filarial antigen Av33 (234 aa).

The signal sequence occupies residues 1-17 (MKILSCLLLCTITVLEG). A disulfide bridge links Cys-135 with Cys-230. Residues 204 to 234 (TSQASEATTIPTTTQTPVEAPETPSFCVPIY) are disordered. The segment covering 211-220 (TTIPTTTQTP) has biased composition (low complexity).

Belongs to the protease inhibitor I33 family.

It is found in the secreted. Its function is as follows. Aspartyl protease inhibitor. The sequence is that of Filarial antigen Av33 from Acanthocheilonema viteae (Filarial nematode worm).